Consider the following 367-residue polypeptide: 3-dehydroquinate synthase (367 aa).

Residues 69-74 (DGEAFK), 103-107 (GVVGD), 127-128 (TT), Lys-140, Lys-149, and 167-170 (TLAT) contribute to the NAD(+) site. Zn(2+) contacts are provided by Glu-182, His-245, and His-262.

It belongs to the sugar phosphate cyclases superfamily. Dehydroquinate synthase family. It depends on Co(2+) as a cofactor. The cofactor is Zn(2+). NAD(+) serves as cofactor.

It localises to the cytoplasm. It catalyses the reaction 7-phospho-2-dehydro-3-deoxy-D-arabino-heptonate = 3-dehydroquinate + phosphate. It participates in metabolic intermediate biosynthesis; chorismate biosynthesis; chorismate from D-erythrose 4-phosphate and phosphoenolpyruvate: step 2/7. Its function is as follows. Catalyzes the conversion of 3-deoxy-D-arabino-heptulosonate 7-phosphate (DAHP) to dehydroquinate (DHQ). The polypeptide is 3-dehydroquinate synthase (Azotobacter vinelandii (strain DJ / ATCC BAA-1303)).